The sequence spans 208 residues: Small ribosomal subunit protein uS4 (208 aa).

Positions 98–161 constitute an S4 RNA-binding domain; sequence QRLDNVVFRM…KSNPQVVRAL (64 aa).

This sequence belongs to the universal ribosomal protein uS4 family. In terms of assembly, part of the 30S ribosomal subunit. Contacts protein S5. The interaction surface between S4 and S5 is involved in control of translational fidelity.

In terms of biological role, one of the primary rRNA binding proteins, it binds directly to 16S rRNA where it nucleates assembly of the body of the 30S subunit. With S5 and S12 plays an important role in translational accuracy. This is Small ribosomal subunit protein uS4 from Aliarcobacter butzleri (strain RM4018) (Arcobacter butzleri).